The chain runs to 2208 residues: RNA-directed RNA polymerase L (2208 aa).

Residues 26-284 (KEALLSQVEV…SHAGTTVPEC (259 aa)) are endonuclease. Glu51, Asp89, and Glu102 together coordinate Mn(2+). Residue Lys115 is part of the active site. The RdRp catalytic domain maps to 1172–1370 (CDMKMAVNNG…FLSSKLNKFV (199 aa)). Asp1330 provides a ligand contact to Mg(2+).

It belongs to the Bunyavirales RNA polymerase family. As to quaternary structure, homomultimer; the oligomeric structure is essential for the polymerase activity. Interacts with nucleoprotein N. Interacts with protein Z; this interaction inhibits viral transcription and replication, Z partially blocks the product exit tunnel for the releasing nascent RNA product. Mn(2+) serves as cofactor. Mg(2+) is required as a cofactor.

The protein localises to the virion. It localises to the host cytoplasm. The enzyme catalyses RNA(n) + a ribonucleoside 5'-triphosphate = RNA(n+1) + diphosphate. Functionally, RNA-dependent RNA polymerase, which is responsible for the replication and transcription of the viral RNA genome using antigenomic RNA as an intermediate. During transcription, synthesizes subgenomic RNAs and assures their capping by a cap-snatching mechanism, which involves the endonuclease activity cleaving the host capped pre-mRNAs. These short capped RNAs are then used as primers for viral transcription. The 3'-end of subgenomic mRNAs molecules are heterogeneous and not polyadenylated. The replicase function is to direct synthesis of antigenomic and genomic RNA which are encapsidated and non capped. As a consequence of the use of the same enzyme for both transcription and replication, these mechanisms need to be well coordinated. These processes may be regulated by proteins N and Z in a dose-dependent manner. Z protein inhibits the viral polymerase L und thus the viral transcription and RNA synthesis. This is RNA-directed RNA polymerase L from Hylaeamys megacephalus (Large-headed rice rat).